A 184-amino-acid chain; its full sequence is dITP/XTP pyrophosphatase (184 aa).

5–10 is a substrate binding site; sequence SSNRHK. Mg(2+)-binding residues include Glu33 and Asp62. Asp62 (proton acceptor) is an active-site residue. Residues Ser63, 136–139, Lys158, and 163–164 each bind substrate; these read WGFD and HR.

The protein belongs to the HAM1 NTPase family. As to quaternary structure, homodimer. Requires Mg(2+) as cofactor.

The catalysed reaction is XTP + H2O = XMP + diphosphate + H(+). It catalyses the reaction dITP + H2O = dIMP + diphosphate + H(+). It carries out the reaction ITP + H2O = IMP + diphosphate + H(+). Functionally, pyrophosphatase that catalyzes the hydrolysis of nucleoside triphosphates to their monophosphate derivatives, with a high preference for the non-canonical purine nucleotides XTP (xanthosine triphosphate), dITP (deoxyinosine triphosphate) and ITP. Seems to function as a house-cleaning enzyme that removes non-canonical purine nucleotides from the nucleotide pool, thus preventing their incorporation into DNA/RNA and avoiding chromosomal lesions. The sequence is that of dITP/XTP pyrophosphatase from Korarchaeum cryptofilum (strain OPF8).